Consider the following 191-residue polypeptide: Syndecan-2-A (191 aa).

A signal peptide spans 1-22; sequence MRNVWLIVPFALLAALSGETWA. At 23-137 the chain is on the extracellular side; the sequence is QADRDLYIDS…NLFHRTEVLA (115 aa). Residues 32–60 are disordered; sequence STESSGNYPVDDDDYSSGSGSGIPARGDD. O-linked (Xyl...) (glycosaminoglycan) serine glycans are attached at residues S36, S48, S50, and S52. The helical transmembrane segment at 138–158 threads the bilayer; sequence AVIAGGGIGFLFAVFLILLLV. The Cytoplasmic segment spans residues 159 to 191; the sequence is YRMRKKDEGSYDLGERKPSSAVYQKAPTKEFYA. The tract at residues 168–191 is disordered; sequence SYDLGERKPSSAVYQKAPTKEFYA.

It belongs to the syndecan proteoglycan family. Post-translationally, O-glycosylated; contains both heparan sulfate and chondroitin sulfate.

Its subcellular location is the membrane. In terms of biological role, cell surface proteoglycan. This is Syndecan-2-A (sdc2-a) from Xenopus laevis (African clawed frog).